The following is a 266-amino-acid chain: GTP cyclohydrolase FolE2 (266 aa).

It belongs to the GTP cyclohydrolase IV family.

It catalyses the reaction GTP + H2O = 7,8-dihydroneopterin 3'-triphosphate + formate + H(+). It functions in the pathway cofactor biosynthesis; 7,8-dihydroneopterin triphosphate biosynthesis; 7,8-dihydroneopterin triphosphate from GTP: step 1/1. In terms of biological role, converts GTP to 7,8-dihydroneopterin triphosphate. The protein is GTP cyclohydrolase FolE2 of Syntrophotalea carbinolica (strain DSM 2380 / NBRC 103641 / GraBd1) (Pelobacter carbinolicus).